The primary structure comprises 417 residues: D-amino acid dehydrogenase (417 aa).

3–17 lines the FAD pocket; the sequence is VIVIGSGVIGLTSAW.

Belongs to the DadA oxidoreductase family. It depends on FAD as a cofactor.

The enzyme catalyses a D-alpha-amino acid + A + H2O = a 2-oxocarboxylate + AH2 + NH4(+). It participates in amino-acid degradation; D-alanine degradation; NH(3) and pyruvate from D-alanine: step 1/1. In terms of biological role, oxidative deamination of D-amino acids. In Vibrio atlanticus (strain LGP32) (Vibrio splendidus (strain Mel32)), this protein is D-amino acid dehydrogenase.